A 247-amino-acid chain; its full sequence is ATP synthase subunit a, chloroplastic (247 aa).

5 consecutive transmembrane segments (helical) span residues 38–58, 95–115, 134–154, 199–219, and 220–240; these read QVLI…VIAV, VPFI…GALL, INTT…AGLS, LVVV…VMFL, and GLFT…AYIG.

Belongs to the ATPase A chain family. F-type ATPases have 2 components, CF(1) - the catalytic core - and CF(0) - the membrane proton channel. CF(1) has five subunits: alpha(3), beta(3), gamma(1), delta(1), epsilon(1). CF(0) has four main subunits: a, b, b' and c.

It is found in the plastid. It localises to the chloroplast thylakoid membrane. Its function is as follows. Key component of the proton channel; it plays a direct role in the translocation of protons across the membrane. This Agrostis stolonifera (Creeping bentgrass) protein is ATP synthase subunit a, chloroplastic.